A 775-amino-acid chain; its full sequence is Probable ubiquitin carboxyl-terminal hydrolase creB (775 aa).

The disordered stretch occupies residues 1-45; sequence MGSFLRSFRHNGGSTAPSVGAVPAKKEPQPPPMTPLEKRLLDMGP. Over residues 36–45 the composition is skewed to basic and acidic residues; it reads LEKRLLDMGP. One can recognise a USP domain in the interval 55-468; sequence YGMENYGNTC…CAYVLFYQET (414 aa). C64 functions as the Nucleophile in the catalytic mechanism. 2 disordered regions span residues 113 to 146 and 238 to 269; these read EAEAQAEKQKAANAQRPGMPPNPQQKPEDKDSPE and ASKQPPIEKSLPAPETADSVDQSSSTGSKTPN. The segment covering 256 to 269 has biased composition (polar residues); the sequence is SVDQSSSTGSKTPN. H419 functions as the Proton acceptor in the catalytic mechanism. Residues 496-775 form a disordered region; sequence LKQNGFPQSP…LRKKSFSILS (280 aa). Composition is skewed to low complexity over residues 546–566 and 576–585; these read ESAPFSPLSPLSPLSPLSPLS and ERVTTVATPP. Residues 586-653 are a coiled coil; the sequence is KNDALAKKER…ASKAEEDRRL (68 aa). Residues 589–662 are compositionally biased toward basic and acidic residues; the sequence is ALAKKERARE…LSHENGKEKQ (74 aa). Positions 668–679 are enriched in basic residues; it reads RLKRGSKSLSHR. Over residues 705-725 the composition is skewed to low complexity; that stretch reads SQTGPTSEQQQQQQQQQSPPN. The segment covering 739–757 has biased composition (basic and acidic residues); it reads TIREDEQVNHKDSKHERTG. Over residues 758-775 the composition is skewed to basic residues; that stretch reads HGKWRSFSLRKKSFSILS.

This sequence belongs to the peptidase C19 family. As to quaternary structure, interacts with creA, creC and qutD.

The enzyme catalyses Thiol-dependent hydrolysis of ester, thioester, amide, peptide and isopeptide bonds formed by the C-terminal Gly of ubiquitin (a 76-residue protein attached to proteins as an intracellular targeting signal).. Functionally, ubiquitin thioesterase component of the regulatory network controlling carbon source utilization through ubiquitination and deubiquitination involving creA, creB, creC, creD and acrB. Deubiquitinates the creA catabolic repressor and the quinate permease qutD. Also plays a role in response to carbon starvation and the control of extracellular proteases activity. The sequence is that of Probable ubiquitin carboxyl-terminal hydrolase creB (creB) from Aspergillus fumigatus (strain ATCC MYA-4609 / CBS 101355 / FGSC A1100 / Af293) (Neosartorya fumigata).